The chain runs to 394 residues: Elongation factor Tu (394 aa).

A tr-type G domain is found at 10–204 (KPHVNIGTIG…AVDSYIPQPV (195 aa)). Residues 19 to 26 (GHVDHGKT) are G1. 19-26 (GHVDHGKT) lines the GTP pocket. Threonine 26 contacts Mg(2+). The tract at residues 60–64 (GITIS) is G2. Residues 81-84 (DCPG) form a G3 region. GTP contacts are provided by residues 81–85 (DCPGH) and 136–139 (NKVD). The tract at residues 136–139 (NKVD) is G4. A G5 region spans residues 174–176 (SAL).

It belongs to the TRAFAC class translation factor GTPase superfamily. Classic translation factor GTPase family. EF-Tu/EF-1A subfamily. Monomer.

It localises to the cytoplasm. It catalyses the reaction GTP + H2O = GDP + phosphate + H(+). In terms of biological role, GTP hydrolase that promotes the GTP-dependent binding of aminoacyl-tRNA to the A-site of ribosomes during protein biosynthesis. The polypeptide is Elongation factor Tu (Rickettsia massiliae (strain Mtu5)).